A 478-amino-acid chain; its full sequence is Protein nucleotidyltransferase YdiU (478 aa).

8 residues coordinate ATP: glycine 84, glycine 86, arginine 87, lysine 107, aspartate 119, glycine 120, arginine 170, and arginine 177. Residue aspartate 246 is the Proton acceptor of the active site. Mg(2+) is bound by residues asparagine 247 and aspartate 256. ATP is bound at residue aspartate 256.

This sequence belongs to the SELO family. It depends on Mg(2+) as a cofactor. Mn(2+) is required as a cofactor.

The catalysed reaction is L-seryl-[protein] + ATP = 3-O-(5'-adenylyl)-L-seryl-[protein] + diphosphate. It catalyses the reaction L-threonyl-[protein] + ATP = 3-O-(5'-adenylyl)-L-threonyl-[protein] + diphosphate. The enzyme catalyses L-tyrosyl-[protein] + ATP = O-(5'-adenylyl)-L-tyrosyl-[protein] + diphosphate. It carries out the reaction L-histidyl-[protein] + UTP = N(tele)-(5'-uridylyl)-L-histidyl-[protein] + diphosphate. The catalysed reaction is L-seryl-[protein] + UTP = O-(5'-uridylyl)-L-seryl-[protein] + diphosphate. It catalyses the reaction L-tyrosyl-[protein] + UTP = O-(5'-uridylyl)-L-tyrosyl-[protein] + diphosphate. Its function is as follows. Nucleotidyltransferase involved in the post-translational modification of proteins. It can catalyze the addition of adenosine monophosphate (AMP) or uridine monophosphate (UMP) to a protein, resulting in modifications known as AMPylation and UMPylation. This is Protein nucleotidyltransferase YdiU from Shigella boydii serotype 18 (strain CDC 3083-94 / BS512).